Reading from the N-terminus, the 285-residue chain is NAD kinase (285 aa).

The active-site Proton acceptor is the Asp-68. Residues 68–69 (DG), 142–143 (ND), Arg-153, Arg-170, Asp-172, and Gln-242 each bind NAD(+).

Belongs to the NAD kinase family. A divalent metal cation serves as cofactor.

Its subcellular location is the cytoplasm. The enzyme catalyses NAD(+) + ATP = ADP + NADP(+) + H(+). Functionally, involved in the regulation of the intracellular balance of NAD and NADP, and is a key enzyme in the biosynthesis of NADP. Catalyzes specifically the phosphorylation on 2'-hydroxyl of the adenosine moiety of NAD to yield NADP. The protein is NAD kinase of Acidobacterium capsulatum (strain ATCC 51196 / DSM 11244 / BCRC 80197 / JCM 7670 / NBRC 15755 / NCIMB 13165 / 161).